We begin with the raw amino-acid sequence, 262 residues long: MLDPIAIQLGPLAIRWYALCIVTGLILAVYLTMKEAPRKKIIPDDILDFILVAFPLAILGARLYYVIFRFDYYSQNLGEIFAIWNGGLAIYGGLITGALVLYIFADRKLINTWDFLDIAAPSVMIAQSLGRWGNFFNQEAYGATVDNLDYLPGFIRDQMYIEGSYRQPTFLYESLWNLLGFALILIFRRKWKSLRRGHITAFYLIWYGFGRMVIEGMRTDSLMFFSLRVSQWLSVVLIGLGIMIVIYQNRKKAPYYITEEEK.

4 consecutive transmembrane segments (helical) span residues Leu-9 to Val-29, Ile-41 to Ala-61, Ile-80 to Val-100, and Leu-109 to Leu-129. Arg-131 provides a ligand contact to a 1,2-diacyl-sn-glycero-3-phospho-(1'-sn-glycerol). Transmembrane regions (helical) follow at residues Gln-167–Phe-187, Gly-197–Met-217, and Leu-227–Tyr-247.

It belongs to the Lgt family.

It localises to the cell membrane. The enzyme catalyses L-cysteinyl-[prolipoprotein] + a 1,2-diacyl-sn-glycero-3-phospho-(1'-sn-glycerol) = an S-1,2-diacyl-sn-glyceryl-L-cysteinyl-[prolipoprotein] + sn-glycerol 1-phosphate + H(+). It participates in protein modification; lipoprotein biosynthesis (diacylglyceryl transfer). Its function is as follows. Catalyzes the transfer of the diacylglyceryl group from phosphatidylglycerol to the sulfhydryl group of the N-terminal cysteine of a prolipoprotein, the first step in the formation of mature lipoproteins. The sequence is that of Phosphatidylglycerol--prolipoprotein diacylglyceryl transferase from Streptococcus pneumoniae (strain JJA).